A 484-amino-acid polypeptide reads, in one-letter code: tRNA sulfurtransferase (484 aa).

The THUMP domain occupies 56–158 (NCLKKALSKV…GNRAYFYTEV (103 aa)). ATP contacts are provided by residues 176–177 (LV), lysine 257, glycine 279, and glutamine 288. Cysteine 336 and cysteine 444 form a disulfide bridge. The Rhodanese domain maps to 396–479 (APEGAVIVDL…TRNAVPPSSQ (84 aa)). The Cysteine persulfide intermediate role is filled by cysteine 444.

Belongs to the ThiI family.

It is found in the cytoplasm. It carries out the reaction [ThiI sulfur-carrier protein]-S-sulfanyl-L-cysteine + a uridine in tRNA + 2 reduced [2Fe-2S]-[ferredoxin] + ATP + H(+) = [ThiI sulfur-carrier protein]-L-cysteine + a 4-thiouridine in tRNA + 2 oxidized [2Fe-2S]-[ferredoxin] + AMP + diphosphate. It catalyses the reaction [ThiS sulfur-carrier protein]-C-terminal Gly-Gly-AMP + S-sulfanyl-L-cysteinyl-[cysteine desulfurase] + AH2 = [ThiS sulfur-carrier protein]-C-terminal-Gly-aminoethanethioate + L-cysteinyl-[cysteine desulfurase] + A + AMP + 2 H(+). It functions in the pathway cofactor biosynthesis; thiamine diphosphate biosynthesis. Catalyzes the ATP-dependent transfer of a sulfur to tRNA to produce 4-thiouridine in position 8 of tRNAs, which functions as a near-UV photosensor. Also catalyzes the transfer of sulfur to the sulfur carrier protein ThiS, forming ThiS-thiocarboxylate. This is a step in the synthesis of thiazole, in the thiamine biosynthesis pathway. The sulfur is donated as persulfide by IscS. The chain is tRNA sulfurtransferase from Pyrobaculum aerophilum (strain ATCC 51768 / DSM 7523 / JCM 9630 / CIP 104966 / NBRC 100827 / IM2).